The chain runs to 449 residues: Putative F-box/LRR-repeat protein At3g44090 (449 aa).

The region spanning 23 to 77 (LASMDCLPDDLLVQILYFLPTKEAISTSLLSKRWRTLYSLVHNLDLDDYIFWHHE) is the F-box domain. LRR repeat units lie at residues 133–163 (YYNL…SLGT), 186–212 (YIWF…TIHH), 214–231 (FRPF…SVTI), 247–278 (TPNV…ELDL), 286–311 (RQVQ…HLTY), and 320–345 (SKKR…VLSG).

This chain is Putative F-box/LRR-repeat protein At3g44090, found in Arabidopsis thaliana (Mouse-ear cress).